A 239-amino-acid polypeptide reads, in one-letter code: Sugar fermentation stimulation protein homolog (239 aa).

Belongs to the SfsA family.

The polypeptide is Sugar fermentation stimulation protein homolog (Methylobacterium sp. (strain 4-46)).